Here is a 311-residue protein sequence, read N- to C-terminus: uncharacterized protein (311 aa).

This is an uncharacterized protein from Bacillus anthracis.